Here is a 63-residue protein sequence, read N- to C-terminus: Conotoxin Cal12.5 (63 aa).

Residues 1–21 (MKVTCVLVVLLLLLPYGDLLG) form the signal peptide.

It belongs to the conotoxin O1 superfamily. In terms of processing, contains 4 disulfide bonds. Expressed by the venom duct.

The protein resides in the secreted. Probable neurotoxin. This Californiconus californicus (California cone) protein is Conotoxin Cal12.5.